The sequence spans 316 residues: Adenine deaminase (316 aa).

Residues His14, His16, and His194 each contribute to the Zn(2+) site. The active-site Proton donor is Glu197. Asp275 contributes to the Zn(2+) binding site. Asp276 contributes to the substrate binding site.

It belongs to the metallo-dependent hydrolases superfamily. Adenosine and AMP deaminases family. Adenine deaminase type 2 subfamily. Requires Zn(2+) as cofactor.

The enzyme catalyses adenine + H2O + H(+) = hypoxanthine + NH4(+). Functionally, catalyzes the hydrolytic deamination of adenine to hypoxanthine. Plays an important role in the purine salvage pathway and in nitrogen catabolism. The protein is Adenine deaminase of Bordetella avium (strain 197N).